A 763-amino-acid polypeptide reads, in one-letter code: Exo-1,4-beta-xylosidase bxlB (763 aa).

Positions 1–23 (MAVFKSWNLALLSSLFIPALCQS) are cleaved as a signal peptide. Asn63 carries N-linked (GlcNAc...) asparagine glycosylation. Residue Asp288 is part of the active site. Asn340, Asn408, Asn419, Asn458, Asn621, and Asn760 each carry an N-linked (GlcNAc...) asparagine glycan.

The protein belongs to the glycosyl hydrolase 3 family.

The protein localises to the secreted. The enzyme catalyses Hydrolysis of (1-&gt;4)-beta-D-xylans, to remove successive D-xylose residues from the non-reducing termini.. It participates in glycan degradation; xylan degradation. Its function is as follows. Xylan 1,4-beta-xylosidase involved in the hydrolysis of xylan, a major structural heterogeneous polysaccharide found in plant biomass representing the second most abundant polysaccharide in the biosphere, after cellulose. Active against rye arabinoxylan and xylohexaose, but not paranitrophenyl-beta-xyloside. This is Exo-1,4-beta-xylosidase bxlB (bxlB) from Emericella nidulans (strain FGSC A4 / ATCC 38163 / CBS 112.46 / NRRL 194 / M139) (Aspergillus nidulans).